The chain runs to 882 residues: Chondroitin sulfate synthase 3 (882 aa).

Over 1-7 (MAVRSRR) the chain is Cytoplasmic. Residues 8–28 (PWMSVALGLVLGFTAASWLIA) traverse the membrane as a helical; Signal-anchor for type II membrane protein segment. Topologically, residues 29–882 (PRVAELSERK…LGVRYNRTLS (854 aa)) are lumenal. A disordered region spans residues 46–167 (SYYGRSAAGP…GDGGAAAPSA (122 aa)). Composition is skewed to low complexity over residues 59-69 (AQQPLPQPQSR) and 120-131 (GATGLPGAPAAE). Residues N155, N279, and N710 are each glycosylated (N-linked (GlcNAc...) asparagine). A divalent metal cation contacts are provided by D720 and H834. N878 carries an N-linked (GlcNAc...) asparagine glycan.

Belongs to the chondroitin N-acetylgalactosaminyltransferase family. It depends on Co(2+) as a cofactor. The cofactor is Mn(2+). Cd(2+) is required as a cofactor. Detected at low levels in brain, cerebral cortex, uterus and small intestine.

The protein resides in the golgi apparatus. The protein localises to the golgi stack membrane. It catalyses the reaction 3-O-(beta-D-GlcA-(1-&gt;3)-beta-D-GalNAc-(1-&gt;4)-beta-D-GlcA-(1-&gt;3)-beta-D-Gal-(1-&gt;3)-beta-D-Gal-(1-&gt;4)-beta-D-Xyl)-L-seryl-[protein] + UDP-N-acetyl-alpha-D-galactosamine = 3-O-(beta-D-GalNAc-(1-&gt;4)-beta-D-GlcA-(1-&gt;3)-beta-D-GalNAc-(1-&gt;4)-beta-D-GlcA-(1-&gt;3)-beta-D-Gal-(1-&gt;3)-beta-D-Gal-(1-&gt;4)-beta-D-Xyl)-L-seryl-[protein] + UDP + H(+). The enzyme catalyses 3-O-{beta-D-GlcA-(1-&gt;3)-[beta-D-GalNAc-(1-&gt;4)-beta-D-GlcA-(1-&gt;3)](n)-beta-D-GalNAc-(1-&gt;4)-beta-D-GlcA-(1-&gt;3)-beta-D-Gal-(1-&gt;3)-beta-D-Gal-(1-&gt;4)-beta-D-Xyl}-L-seryl-[protein] + UDP-N-acetyl-alpha-D-galactosamine = 3-O-{[beta-D-GalNAc-(1-&gt;4)-beta-D-GlcA-(1-&gt;3)](n+1)-beta-D-GalNAc-(1-&gt;4)-beta-D-GlcA-(1-&gt;3)-beta-D-Gal-(1-&gt;3)-beta-D-Gal-(1-&gt;4)-beta-D-Xyl}-L-seryl-[protein] + UDP + H(+). It carries out the reaction 3-O-(beta-D-GalNAc-(1-&gt;4)-beta-D-GlcA-(1-&gt;3)-beta-D-Gal-(1-&gt;3)-beta-D-Gal-(1-&gt;4)-beta-D-Xyl)-L-seryl-[protein] + UDP-alpha-D-glucuronate = 3-O-(beta-D-GlcA-(1-&gt;3)-beta-D-GalNAc-(1-&gt;4)-beta-D-GlcA-(1-&gt;3)-beta-D-Gal-(1-&gt;3)-beta-D-Gal-(1-&gt;4)-beta-D-Xyl)-L-seryl-[protein] + UDP + H(+). The catalysed reaction is 3-O-{[beta-D-GalNAc-(1-&gt;4)-beta-D-GlcA-(1-&gt;3)](n)-beta-D-GalNAc-(1-&gt;4)-beta-D-GlcA-(1-&gt;3)-beta-D-Gal-(1-&gt;3)-beta-D-Gal-(1-&gt;4)-beta-D-Xyl}-L-seryl-[protein] + UDP-alpha-D-glucuronate = 3-O-{beta-D-GlcA-(1-&gt;3)-[beta-D-GalNAc-(1-&gt;4)-beta-D-GlcA-(1-&gt;3)](n)-beta-D-GalNAc-(1-&gt;4)-beta-D-GlcA-(1-&gt;3)-beta-D-Gal-(1-&gt;3)-beta-D-Gal-(1-&gt;4)-beta-D-Xyl}-L-seryl-[protein] + UDP + H(+). In terms of biological role, has both beta-1,3-glucuronic acid and beta-1,4-N-acetylgalactosamine transferase activity. Transfers glucuronic acid (GlcUA) from UDP-GlcUA and N-acetylgalactosamine (GalNAc) from UDP-GalNAc to the non-reducing end of the elongating chondroitin polymer. Specific activity is much reduced compared to CHSY1. The chain is Chondroitin sulfate synthase 3 (CHSY3) from Homo sapiens (Human).